A 265-amino-acid chain; its full sequence is Urease accessory protein UreH (265 aa).

Belongs to the UreD family. UreH, UreF and UreG form a complex that acts as a GTP-hydrolysis-dependent molecular chaperone, activating the urease apoprotein by helping to assemble the nickel containing metallocenter of UreC. The UreE protein probably delivers the nickel.

It localises to the cytoplasm. Required for maturation of urease via the functional incorporation of the urease nickel metallocenter. The polypeptide is Urease accessory protein UreH (Helicobacter pylori (strain G27)).